The chain runs to 141 residues: Large ribosomal subunit protein uL11 (141 aa).

This sequence belongs to the universal ribosomal protein uL11 family. As to quaternary structure, part of the ribosomal stalk of the 50S ribosomal subunit. Interacts with L10 and the large rRNA to form the base of the stalk. L10 forms an elongated spine to which L12 dimers bind in a sequential fashion forming a multimeric L10(L12)X complex. One or more lysine residues are methylated.

Forms part of the ribosomal stalk which helps the ribosome interact with GTP-bound translation factors. The sequence is that of Large ribosomal subunit protein uL11 from Synechococcus sp. (strain RCC307).